Reading from the N-terminus, the 295-residue chain is uncharacterized protein (295 aa).

This is an uncharacterized protein from Acanthamoeba polyphaga (Amoeba).